The chain runs to 434 residues: UDP-glucose 6-dehydrogenase (434 aa).

NAD(+) is bound by residues 2–19, V11, D30, K35, T121, and E152; that span reads NITF…GIIM. Substrate contacts are provided by residues 148 to 152, K204, N208, 249 to 253, and G257; these read EFLRE and FLNAG. C260 functions as the Nucleophile in the catalytic mechanism. Position 263 (K263) interacts with NAD(+). K321 lines the substrate pocket. R328 contacts NAD(+).

It belongs to the UDP-glucose/GDP-mannose dehydrogenase family.

It catalyses the reaction UDP-alpha-D-glucose + 2 NAD(+) + H2O = UDP-alpha-D-glucuronate + 2 NADH + 3 H(+). It participates in nucleotide-sugar biosynthesis; UDP-alpha-D-glucuronate biosynthesis; UDP-alpha-D-glucuronate from UDP-alpha-D-glucose: step 1/1. The polypeptide is UDP-glucose 6-dehydrogenase (udg) (Rickettsia typhi (strain ATCC VR-144 / Wilmington)).